Consider the following 78-residue polypeptide: Acyl carrier protein (78 aa).

The Carrier domain maps to 2 to 77; it reads STIEESVKAI…AAIDFIQASQ (76 aa). Position 37 is an O-(pantetheine 4'-phosphoryl)serine (S37).

It belongs to the acyl carrier protein (ACP) family. 4'-phosphopantetheine is transferred from CoA to a specific serine of apo-ACP by AcpS. This modification is essential for activity because fatty acids are bound in thioester linkage to the sulfhydryl of the prosthetic group.

It localises to the cytoplasm. The protein operates within lipid metabolism; fatty acid biosynthesis. In terms of biological role, carrier of the growing fatty acid chain in fatty acid biosynthesis. This is Acyl carrier protein from Sodalis glossinidius (strain morsitans).